Reading from the N-terminus, the 215-residue chain is Octanoyltransferase (215 aa).

A BPL/LPL catalytic domain is found at 31-206 (PESQDEVWLV…QLVRHLDYAE (176 aa)). Substrate-binding positions include 70-77 (RGGQVTYH), 137-139 (SLG), and 150-152 (GLA). Cys168 serves as the catalytic Acyl-thioester intermediate.

This sequence belongs to the LipB family.

It localises to the cytoplasm. The enzyme catalyses octanoyl-[ACP] + L-lysyl-[protein] = N(6)-octanoyl-L-lysyl-[protein] + holo-[ACP] + H(+). It participates in protein modification; protein lipoylation via endogenous pathway; protein N(6)-(lipoyl)lysine from octanoyl-[acyl-carrier-protein]: step 1/2. Its function is as follows. Catalyzes the transfer of endogenously produced octanoic acid from octanoyl-acyl-carrier-protein onto the lipoyl domains of lipoate-dependent enzymes. Lipoyl-ACP can also act as a substrate although octanoyl-ACP is likely to be the physiological substrate. The polypeptide is Octanoyltransferase (Pseudomonas entomophila (strain L48)).